The following is an 880-amino-acid chain: Tyrosine-protein kinase receptor TYRO3 (880 aa).

Positions 1 to 28 are cleaved as a signal peptide; that stretch reads MVYPGPPGLIAGLLLAALSLSCVDGAKA. Ig-like C2-type domains follow at residues 29-114 and 125-206; these read LGFV…KSVS and PYFT…AIVE. The Extracellular portion of the chain corresponds to 29 to 414; that stretch reads LGFVGHGYNL…QRHPHTRMSW (386 aa). Residues Asn37 and Asn49 are each glycosylated (N-linked (GlcNAc...) asparagine). The cysteines at positions 50 and 103 are disulfide-linked. N-linked (GlcNAc...) asparagine glycosylation occurs at Asn143. A disulfide bond links Cys146 and Cys189. Fibronectin type-III domains follow at residues 213–306 and 311–401; these read PPFN…TKET and LPQN…SKEE. Asn216, Asn279, Asn351, and Asn365 each carry an N-linked (GlcNAc...) asparagine glycan. A helical membrane pass occupies residues 415–435; sequence VPMVLGILTALVTVVAMTLIF. Residues 436 to 880 lie on the Cytoplasmic side of the membrane; it reads LRKGRKETRF…MQEEQVVITL (445 aa). The Protein kinase domain maps to 503–774; sequence FTLGRTLGKG…VDLKQRLEAI (272 aa). Residues 509–517 and Lys535 each bind ATP; that span reads LGKGEFGSV. The Proton acceptor role is filled by Asp640. A Phosphotyrosine; by autocatalysis modification is found at Tyr671. The segment at 846-880 is disordered; that stretch reads EWSSSAQNGEARGLLHEEEEEEEEEMQEEQVVITL. Positions 862 to 873 are enriched in acidic residues; the sequence is EEEEEEEEEMQE.

This sequence belongs to the protein kinase superfamily. Tyr protein kinase family. AXL/UFO subfamily. Post-translationally, tyrosine phosphorylated upon receptor stimulation. In terms of tissue distribution, detected in brain, spinal cord, intestine, lung, stomach, ovary, testis, skin and eye.

It is found in the cell membrane. It catalyses the reaction L-tyrosyl-[protein] + ATP = O-phospho-L-tyrosyl-[protein] + ADP + H(+). Functionally, may be involved in cell adhesion processes, particularly in the central nervous system. The sequence is that of Tyrosine-protein kinase receptor TYRO3 (tyro3) from Xenopus laevis (African clawed frog).